The sequence spans 281 residues: Undecaprenyl-diphosphatase (281 aa).

7 helical membrane passes run 4–24, 46–63, 83–103, 108–128, 187–207, 222–242, and 257–277; these read ILLLKAVILGVVEGLTEFLPI, AFEVIIQFGAILAVCWEF, FVLNLFIASIPAMGLGFLFGK, VLFSPIPVASAFIVGTLIIFW, AVATEFSFFLAIPVIGGATAY, EFTLAIVVGFIAAFISAFVCV, and FAWYRIAFGILVLFTSYTGLI.

This sequence belongs to the UppP family.

The protein resides in the cell inner membrane. The enzyme catalyses di-trans,octa-cis-undecaprenyl diphosphate + H2O = di-trans,octa-cis-undecaprenyl phosphate + phosphate + H(+). Its function is as follows. Catalyzes the dephosphorylation of undecaprenyl diphosphate (UPP). Confers resistance to bacitracin. The sequence is that of Undecaprenyl-diphosphatase from Polynucleobacter necessarius subsp. necessarius (strain STIR1).